An 835-amino-acid chain; its full sequence is MSDNIPNDPFADRESQNYENPIPSREFILEFLEQAGVPMNRNDLFEALKLAGEEQYEGLRRRLRAMERDGQLVFTRRQCYALPEKLEMVKGYVIGHKDGHGWVRPEGSVGKDDDILLPHHQMKNIIHGDFVLVQPTDNSKRGRREGRLVRVLEERNSQIVGRFFLEYGYSYVVPDDSRISQDILIPNEHKAGARMGNVVVIEITDRGSRSRGMMGKVVEVLGENMAPGMETQIAIRTHQIPYEWPEAVEKQIVNLGEEVPEEAKVGRVDLRELPLVTIDGEDARDFDDAVFCEKKKDGGWRLWVAIADVSYYVRPDSALDKEAINRGNSVYFPSQVVPMLPEVLSNGLCSLNPQVDRLCMVCEMTISESGKLSSYKHYEAVMNSHARLTYSKVSAILEGDEELRERYQPLVSHLEELHAMYKVLKEARDQRGAIEFETVETKFIFNAERKIESIEPVIRNDAHKIIEECMILANIASASLVEKAKEPALYRIHESPGELRLQGFRDFLSELGLELKGGLEPSPTDYADLARQIAGRQDQELIQTMLLRSMKQAVYNADNAGHFGLALKRYAHFTSPIRRYPDLLLHRAIKYLIAKEEGRNQDRWTPTGGYHYSFDDMDFYGEQCSMTERRADDATREVADWLKCEYMQDHVGDELEGVIANVTSFGFFVRLTDLHIDGLVHISTLANDYYQFDPIGQRLIGESFGNIYRLGDAVKVKVLAVNLDDKQIDFELVETSRKLRGEGKTAKKRAAEAKRKAKEKKRAATRSSSKESATARAVPAIEPTKRPEQTDSGRKRKGPKRGDDDSAKKPKVKKAHKKKPHSKPKKTKRTKQDAQ.

One can recognise an RNB domain in the interval 267-593; sequence RVDLRELPLV…LLHRAIKYLI (327 aa). The region spanning 652–733 is the S1 motif domain; that stretch reads GDELEGVIAN…DDKQIDFELV (82 aa). Over residues 739–754 the composition is skewed to basic and acidic residues; it reads LRGEGKTAKKRAAEAK. The segment at 739 to 835 is disordered; that stretch reads LRGEGKTAKK…KTKRTKQDAQ (97 aa). Residues 755–764 are compositionally biased toward basic residues; that stretch reads RKAKEKKRAA. The segment covering 765–777 has biased composition (low complexity); it reads TRSSSKESATARA. The span at 783–793 shows a compositional bias: basic and acidic residues; sequence PTKRPEQTDSG. Basic residues predominate over residues 809-829; sequence KPKVKKAHKKKPHSKPKKTKR.

This sequence belongs to the RNR ribonuclease family. RNase R subfamily.

The protein resides in the cytoplasm. The catalysed reaction is Exonucleolytic cleavage in the 3'- to 5'-direction to yield nucleoside 5'-phosphates.. In terms of biological role, 3'-5' exoribonuclease that releases 5'-nucleoside monophosphates and is involved in maturation of structured RNAs. This chain is Ribonuclease R, found in Vibrio parahaemolyticus serotype O3:K6 (strain RIMD 2210633).